Reading from the N-terminus, the 116-residue chain is MRHRNRVKKLGKPADQRRALLRALTTELIRHGRITTTLVRAKVVRSEVDKIITLAKDGSLAARRRALGYIYDKQLVHALFEQVSSRYGNRQGGYTRILHTVPRRGDNAEMAIIELV.

Belongs to the bacterial ribosomal protein bL17 family. As to quaternary structure, part of the 50S ribosomal subunit. Contacts protein L32.

This is Large ribosomal subunit protein bL17 from Trichormus variabilis (strain ATCC 29413 / PCC 7937) (Anabaena variabilis).